We begin with the raw amino-acid sequence, 258 residues long: MTPPKLRASLSPSLLLLLSGCLLAAARREKGAASNVAEPVPGPTGGSSGRFLSPEQHACSWQLLLPAPEAAAGSELALRCQSPDGARHQCAYRGHPERCAAYAARRAHFWKQVLGGLRKKRRPCHDPAPLQARLCAGKKGHGAELRLVPRASPPARPTVAGFAGESKPRARNRGRTRERASGPAAGTPPPQSAPPKENPSERKTNEGKRKAALVPNEERPMGTGPDPDGLDGNAELTETYCAEKWHSLCNFFVNFWNG.

An N-terminal signal peptide occupies residues 1–26; it reads MTPPKLRASLSPSLLLLLSGCLLAAA. Disulfide bonds link C59–C80 and C90–C124. The interval 146–231 is disordered; it reads RLVPRASPPA…GTGPDPDGLD (86 aa). Residues 186-197 are compositionally biased toward pro residues; sequence GTPPPQSAPPKE. Over residues 198 to 209 the composition is skewed to basic and acidic residues; sequence NPSERKTNEGKR. C241 and C249 are oxidised to a cystine.

This sequence belongs to the fibroblast growth factor-binding protein family. Interacts with FGF2.

It is found in the secreted. Heparin-binding protein which binds to FGF2, prevents binding of FGF2 to heparin and probably inhibits immobilization of FGF2 on extracellular matrix glycosaminoglycans, allowing its release and subsequent activation of FGFR signaling which leads to increased vascular permeability. The sequence is that of Fibroblast growth factor-binding protein 3 (FGFBP3) from Homo sapiens (Human).